The chain runs to 578 residues: Sulfite reductase [NADPH] hemoprotein beta-component (578 aa).

A compositionally biased stretch (polar residues) spans 1 to 11 (MSANQQSNSQE). A disordered region spans residues 1 to 20 (MSANQQSNSQEVLGEVLGPL). Residues Cys-441, Cys-447, Cys-487, and Cys-491 each contribute to the [4Fe-4S] cluster site. Cys-491 is a binding site for siroheme.

Belongs to the nitrite and sulfite reductase 4Fe-4S domain family. Alpha(8)-beta(8). The alpha component is a flavoprotein, the beta component is a hemoprotein. The cofactor is siroheme. [4Fe-4S] cluster is required as a cofactor.

The catalysed reaction is hydrogen sulfide + 3 NADP(+) + 3 H2O = sulfite + 3 NADPH + 4 H(+). It functions in the pathway sulfur metabolism; hydrogen sulfide biosynthesis; hydrogen sulfide from sulfite (NADPH route): step 1/1. Functionally, component of the sulfite reductase complex that catalyzes the 6-electron reduction of sulfite to sulfide. This is one of several activities required for the biosynthesis of L-cysteine from sulfate. The polypeptide is Sulfite reductase [NADPH] hemoprotein beta-component (Vibrio campbellii (strain ATCC BAA-1116)).